Here is a 404-residue protein sequence, read N- to C-terminus: RNA exonuclease 3 (404 aa).

A compositionally biased stretch (polar residues) spans 1–17 (MNNNAQNKRSLDDSNGN). Residues 1 to 29 (MNNNAQNKRSLDDSNGNDTKRPKQEDPKY) form a disordered region. Basic and acidic residues predominate over residues 18–28 (DTKRPKQEDPK). In terms of domain architecture, Exonuclease spans 241–389 (VLGIDCEMGF…EDSIAAIDIV (149 aa)).

This sequence belongs to the REXO1/REXO3 family.

The protein localises to the cytoplasm. Its subcellular location is the nucleus. 3' to 5' exoribonuclease required for proper 3' end maturation of MRP RNA and of the U5L snRNA. The polypeptide is RNA exonuclease 3 (REX3) (Candida albicans (strain SC5314 / ATCC MYA-2876) (Yeast)).